The primary structure comprises 462 residues: Nuclear distribution protein PAC1 (462 aa).

A LisH domain is found at 9–41 (QAEELHKAIIAYLGVINAPKTAAAFREEVNFSA). Residues 60 to 87 (TSVVRLQKKVLELEQRNQSLQSELDSTT) adopt a coiled-coil conformation. A compositionally biased stretch (polar residues) spans 78-99 (SLQSELDSTTPTSLLRRNQDPS). A disordered region spans residues 78-103 (SLQSELDSTTPTSLLRRNQDPSSWLP). WD repeat units lie at residues 113–154 (SHRS…RTVK), 156–196 (HTKG…KNIR), 200–247 (GHDH…CVKT), 250–289 (GHADWVRDVSPSFDGRWLLSAGNDQTARLWDASSGEAKCT), 292–352 (GHEH…IKTL), 354–393 (GHDNWVRALIFHPGGKYLLSASDDKTIRCWDLTQEGRCVK), 398–445 (AHSH…AGIR), and 447–462 (VIATGCVDLNVRIFAS). A disordered region spans residues 414-434 (KDAPTNGDAPNGTTANGASKK).

It belongs to the WD repeat LIS1/nudF family. As to quaternary structure, self-associates. Interacts with NDL1 and dynein.

Its subcellular location is the cytoplasm. The protein localises to the cytoskeleton. It is found in the spindle pole. Positively regulates the activity of the minus-end directed microtubule motor protein dynein. May enhance dynein-mediated microtubule sliding by targeting dynein to the microtubule plus end. Required for nuclear migration during vegetative growth as well as development. Required for retrograde early endosome (EE) transport from the hyphal tip. Required for localization of dynein to the mitotic spindle poles. Recruits additional proteins to the dynein complex at SPBs. The chain is Nuclear distribution protein PAC1 from Phaeosphaeria nodorum (strain SN15 / ATCC MYA-4574 / FGSC 10173) (Glume blotch fungus).